We begin with the raw amino-acid sequence, 729 residues long: Polyribonucleotide nucleotidyltransferase (729 aa).

Residues Asp-485 and Asp-491 each contribute to the Mg(2+) site. The region spanning 552–611 is the KH domain; sequence PRITTMKVAEDKIRTIIGKGGATIKGLIESTGVSIDIDDSGVVQLFSPDKMALEEAQKQI. The 69-residue stretch at 621–689 folds into the S1 motif domain; the sequence is GQTYQGKVSK…KQGRVKLEWK (69 aa).

The protein belongs to the polyribonucleotide nucleotidyltransferase family. As to quaternary structure, component of the RNA degradosome, which is a multiprotein complex involved in RNA processing and mRNA degradation. The cofactor is Mg(2+).

The protein localises to the cytoplasm. The enzyme catalyses RNA(n+1) + phosphate = RNA(n) + a ribonucleoside 5'-diphosphate. In terms of biological role, involved in mRNA degradation. Catalyzes the phosphorolysis of single-stranded polyribonucleotides processively in the 3'- to 5'-direction. This is Polyribonucleotide nucleotidyltransferase from Legionella pneumophila subsp. pneumophila (strain Philadelphia 1 / ATCC 33152 / DSM 7513).